The sequence spans 94 residues: Venom peptide SjAPI (94 aa).

The N-terminal stretch at 1-24 is a signal peptide; it reads MKWGALLCIFGFLAFCSVLDRGLG. The propeptide occupies 25 to 30; sequence WIPDIW. Intrachain disulfides connect Cys33–Cys70, Cys43–Cys66, Cys47–Cys62, Cys51–Cys92, and Cys72–Cys86. Positions 33-92 constitute a TIL domain; sequence CSSKNEEFQQCGSSCPETCANHKNPEPKSCAAVCFVGCVCKPGFIRDDLKGSICVKPEDC. Residues 63–65 are protease binding loop; sequence AAV.

The protein belongs to the serine protease inhibitor-like (TIL domain-containing) family. In terms of tissue distribution, expressed by the venom gland.

The protein resides in the secreted. Its function is as follows. Recombinant protein inhibits both alpha-chymotrypsin (Ki=97.1 nM) and elastase (Ki=3700 nM). The sequence is that of Venom peptide SjAPI from Scorpiops jendeki (Scorpion).